A 190-amino-acid polypeptide reads, in one-letter code: uncharacterized protein (190 aa).

This is an uncharacterized protein from Borreliella burgdorferi (strain ATCC 35210 / DSM 4680 / CIP 102532 / B31) (Borrelia burgdorferi).